The primary structure comprises 196 residues: Holliday junction branch migration complex subunit RuvA (196 aa).

Residues 1-63 are domain I; it reads MYEYFKGIIS…EDAELLYGFA (63 aa). The tract at residues 64–142 is domain II; it reads TEEEKQLFLS…AAGSPAESKA (79 aa). The interval 143-146 is flexible linker; the sequence is PVQT. A domain III region spans residues 147 to 196; that stretch reads ADNQELEEAMEAMLALGYKAAELKKIKKFFEGTTDTAENYIKSALKMLVK.

The protein belongs to the RuvA family. In terms of assembly, homotetramer. Forms an RuvA(8)-RuvB(12)-Holliday junction (HJ) complex. HJ DNA is sandwiched between 2 RuvA tetramers; dsDNA enters through RuvA and exits via RuvB. An RuvB hexamer assembles on each DNA strand where it exits the tetramer. Each RuvB hexamer is contacted by two RuvA subunits (via domain III) on 2 adjacent RuvB subunits; this complex drives branch migration. In the full resolvosome a probable DNA-RuvA(4)-RuvB(12)-RuvC(2) complex forms which resolves the HJ.

The protein localises to the cytoplasm. The RuvA-RuvB-RuvC complex processes Holliday junction (HJ) DNA during genetic recombination and DNA repair, while the RuvA-RuvB complex plays an important role in the rescue of blocked DNA replication forks via replication fork reversal (RFR). RuvA specifically binds to HJ cruciform DNA, conferring on it an open structure. The RuvB hexamer acts as an ATP-dependent pump, pulling dsDNA into and through the RuvAB complex. HJ branch migration allows RuvC to scan DNA until it finds its consensus sequence, where it cleaves and resolves the cruciform DNA. This Streptococcus sanguinis (strain SK36) protein is Holliday junction branch migration complex subunit RuvA.